Here is a 1418-residue protein sequence, read N- to C-terminus: MIGATSFLNHSGPRPPRYRTPSPPRRAVEPISPFTTTTDFRASWIDRGDSQAASYDRDRVTSNNDVYSSTNRGSHGRTSHGRSSSTIDTLATIALATSPTFAPLSYRPPSQDPTPAMPLFPSQSIESTERPAKRPRSEKSPSPLHQPQTTVAPDANPSSTFDSMKTDAELLLNFARPSNFQPAAFYPSKRVSIDESYHPHYGEEPKSHFRAGLGSTYILPDGEKSAYHTSANTAFPASRMRSQSDGSAFISRPVIQGVRPNTSSSTLPPIVWQEEEGNAKTGPGPPSTKFPGAETRYENSVFTGIDTGADRASLDVPPRGDDDTESDENNQANCAACNLVRIPVDSEEQGDVTWISCDGCKQWFHIVCAGFKNDREIRTVDKFICRRCRPIHGQTTFVRKSSRARTAIDYAGLNQGLVKAASDSLEHHYIEPIREGKIRFLPDNFPRMRPELVTAEYFERGSGMTEPIVIPAHLNTRDSIPIVDPEFDSLVQEATSQEMFDELLEHLPEEGKDFETVIDCGQDQLDMVVPQGLTVRAVAELYGPEERVEVIDVKSQQGEDKRWNMQKWADYYESTGSKVVRNVISLEVSQSKLGKLIRRPKIVRDLDLQDAVWPEELKAIGDYPKVQFYCLMSVADCYTDFHIDFGGSSVYYHILKGKKTFFFIPPKDKHLKKYEDWCNSPAQDSTFLGDQTKECYRVDLSEGDTMLIPSGWIHAVWTPTNSLVIGGNFLTRLNYGMQIKVAKIEKDTKVPRKFRYPFFQRIQWYTALKYLEDDPIPQSVLNAFAEDENYRFHRAYPIYYEFGERENKAPAGDPYHNSRFYSQAELEGLPDLAKYLLRTALIASGYMVEGVTMDARNAVKRSIPKGQGDPIDTVRKFGIWVAWKRGNEKAPQWTRPGVVESNAKLSLTEKKPAGRPSRRSERNAEGQRMYAERQAVQRPLEQPPDLTNGLSSEESSSAPSTVEIPQSTVISTLPGTETKELKEEIAQKPRSIHRSSGLGPKRVACDACRKRRIRCRHKDEHNDTISAKQTTFGTFPAGVQSSLAHDAASALNSLAAIASEAGFQDAANGHGLERLEGSGNYSTAILSTPNAATSKVHDGSPEGLNTGKKGRSKACDDCRKSKRRCIHDEYGRIDPIKAQERSKPRATASAKRPRPPQEEDAAFTLNKRPKQESTSPVARPASLFRAEGDMSHTQRPVDLEASSYFGTAHDHNGIAQTKLTSAVGQTSYASPPAFQSDTVVMEVAGQGVSKPTASLVSPPTSQADETDVPPEQDAEKDNHVVYYTPTTSSRHSSRQPRHVDRYVPESQPAKAVKTTHTPSKRRASCSGPTTARRVTPGAQGSSKKPASRPSSSHAKKGVSPVTEKKFDRMTTTSTSPGHKGAKRERTAIADDEPDAESLRLIRELQEQEFGLRKRTTRV.

Disordered stretches follow at residues 1 to 86 (MIGA…SSST), 102 to 162 (APLS…STFD), and 308 to 329 (GADRASLDVPPRGDDDTESDEN). Residues 44–60 (WIDRGDSQAASYDRDRV) are compositionally biased toward basic and acidic residues. Residues 61–71 (TSNNDVYSSTN) are compositionally biased toward polar residues. The segment covering 127–139 (STERPAKRPRSEK) has biased composition (basic and acidic residues). Over residues 143-162 (PLHQPQTTVAPDANPSSTFD) the composition is skewed to polar residues. Residues 308-321 (GADRASLDVPPRGD) show a composition bias toward basic and acidic residues. Residues 331 to 391 (QANCAACNLV…KFICRRCRPI (61 aa)) form a PHD-type zinc finger. Positions 588–746 (VSQSKLGKLI…MQIKVAKIEK (159 aa)) constitute a JmjC domain. Thr639 contacts substrate. The Fe cation site is built by His642 and Asp644. Residue Lys659 coordinates substrate. His714 contacts Fe cation. 4 disordered regions span residues 891 to 964 (PQWT…TVEI), 1090 to 1118 (NAATSKVHDGSPEGLNTGKKGRSKACDDC), 1130 to 1195 (YGRI…HTQR), and 1250 to 1394 (KPTA…DEPD). A compositionally biased stretch (basic and acidic residues) spans 907–925 (LTEKKPAGRPSRRSERNAE). Basic and acidic residues-rich tracts occupy residues 1130–1143 (YGRIDPIKAQERSK) and 1186–1195 (AEGDMSHTQR). Residues 1250-1263 (KPTASLVSPPTSQA) are compositionally biased toward polar residues. Positions 1341–1352 (SSKKPASRPSSS) are enriched in low complexity.

Belongs to the JHDM1 histone demethylase family. It depends on Fe(2+) as a cofactor.

Its subcellular location is the nucleus. It carries out the reaction N(6),N(6)-dimethyl-L-lysyl(36)-[histone H3] + 2 2-oxoglutarate + 2 O2 = L-lysyl(36)-[histone H3] + 2 formaldehyde + 2 succinate + 2 CO2. Functionally, histone demethylase that specifically demethylates 'Lys-36' of histone H3, thereby playing a central role in histone code. In Aspergillus fumigatus (strain ATCC MYA-4609 / CBS 101355 / FGSC A1100 / Af293) (Neosartorya fumigata), this protein is JmjC domain-containing histone demethylation protein 1 (jhd1).